Here is a 498-residue protein sequence, read N- to C-terminus: MRINPTTSSPVVSTLEEKNLGRIAQIIGPVLDVVFPPGKMPNIYNALVVKGRDTVGQQINVTCEVQQLLGNNRVRAVAMSATDGLMRGMEVIDTGAPLSVPVGGATLGRIFNVLGEPVDNLGPVDTRTTSPIHRSAPAFIQLDTKLSIFETGIKVVDLLAPYRRGGKIGLFGGAGVGKTVLIMELINNIAKAHGGVSVFGGVGERTREGNDLYMEMKESGVINEKNIAESKVALVYGQMNEPPGARMRVGLTALTMAEYFRDVNEQDVLLFIDNIFRFVQAGSEVSALLGRMPSAVGYQPTLSTEMGSLQERITSTKEGSITSIQAVYVPADDLTDPAPATTFAHLDATTVLSRVLAAKGIYPAVDPLDSTSTMLQPRIVGEEHYETAQRVKQTSQRYKELQDIIAILGLDELSEEDRLTVARARKIERFLSQPFFVAEVFTGSPGKYVGLAETIRGFQLILSGELDGLPEQAFYLVGNIDEATAKAMNLEVESKLNK.

172–179 serves as a coordination point for ATP; the sequence is GGAGVGKT.

Belongs to the ATPase alpha/beta chains family. F-type ATPases have 2 components, CF(1) - the catalytic core - and CF(0) - the membrane proton channel. CF(1) has five subunits: alpha(3), beta(3), gamma(1), delta(1), epsilon(1). CF(0) has four main subunits: a(1), b(1), b'(1) and c(9-12).

Its subcellular location is the plastid. The protein resides in the chloroplast thylakoid membrane. It carries out the reaction ATP + H2O + 4 H(+)(in) = ADP + phosphate + 5 H(+)(out). Functionally, produces ATP from ADP in the presence of a proton gradient across the membrane. The catalytic sites are hosted primarily by the beta subunits. The protein is ATP synthase subunit beta, chloroplastic of Hyophorbe lagenicaulis (Bottle palm).